Here is an 85-residue protein sequence, read N- to C-terminus: Large ribosomal subunit protein bL27 (85 aa).

Positions 1-22 are disordered; the sequence is MAHKKGASSTRNGRDSNAQRLG. Over residues 7-19 the composition is skewed to polar residues; it reads ASSTRNGRDSNAQ.

This sequence belongs to the bacterial ribosomal protein bL27 family.

The sequence is that of Large ribosomal subunit protein bL27 from Leifsonia xyli subsp. xyli (strain CTCB07).